A 668-amino-acid polypeptide reads, in one-letter code: Ecdysone oxidase (668 aa).

FAD contacts are provided by residues 137 to 140 (NHMV), V270, and 536 to 537 (WH). Catalysis depends on H537, which acts as the Proton acceptor.

This sequence belongs to the GMC oxidoreductase family. Requires FAD as cofactor.

The catalysed reaction is ecdysone + O2 = 3-dehydroecdysone + H2O2. Involved in the inactivation of ecdysteroid molting hormones by converting ecdysteroids into 3-dehydroecdysteroids. The chain is Ecdysone oxidase from Bombyx mori (Silk moth).